The chain runs to 339 residues: MALIKEPLKPTGALDEFRSFDVTPIIGTEFPDASLKAWLEDPKADDLLRELAITVSRRGVVFFRRQDGLTEEMQKAIVQKLGVLSGKPATSSLHRHAHQPDPNADPEILWINSEENKKLLAGTPFDPALPARQSCRGLWHNDISYEPNPSDYALLRITQPPALVVADLPAIDTLWASGYEVFDRISRPIQKFLETLTATFGELRERDGSDPKFQVPRGSPANVGTNLRPTHPVIRTNPVTGWKSVYAVGLHVQTINGLASDESDGLKKWFTKLIVENHDLQVRFRWNNANDVAIWDNRCTYHTATYDHEGYGIREGYRACGVGEKPYLDPNSTGRREAR.

His-96 contributes to the substrate binding site. Residues His-140 and Asp-142 each contribute to the Fe cation site. 2-oxoglutarate is bound at residue Thr-173. Residues 207-230 (DGSDPKFQVPRGSPANVGTNLRPT) form a disordered region. Residue His-302 participates in Fe cation binding. Residues Arg-314 and Arg-318 each contribute to the 2-oxoglutarate site. Arg-318 is a substrate binding site.

Belongs to the TfdA dioxygenase family. Requires Fe(2+) as cofactor.

The protein operates within secondary metabolite biosynthesis; terpenoid biosynthesis. Alpha-ketoglutarate-dependent dioxygenase; part of the gene cluster that mediates the biosynthesis of betaestacins. The bifunctional terpene synthase btcA converts isopentenyl diphosphate (IPP) and dimethylallyl diphosphate (DMAPP) into the sesterterpene betaestacin I. The C-terminal prenyltransferase (PT) domain of btcA catalyzes formation of GFPP, whereas the N-terminal terpene cyclase (TC) domain catalyzes the cyclization of GFPP into betaestacin I. The cytochrome P450 monooxygenase btcB is then responsible for the six-step oxidation of betaestacin I to yield betaestacin II. The roles of the cytochrome P450 monooxygenase btcC and the alpha-ketoglutarate-dependent dioxygenase btcD have not been identified yet. The protein is Alpha-ketoglutarate-dependent dioxygenase btcD of Neocamarosporium betae (Beet black rot fungus).